A 272-amino-acid polypeptide reads, in one-letter code: HMP-PP phosphatase (272 aa).

The active-site Nucleophile is D8. Mg(2+) contacts are provided by D8, D10, and D212.

It belongs to the HAD-like hydrolase superfamily. Cof family. Requires Mg(2+) as cofactor.

It carries out the reaction 4-amino-2-methyl-5-(diphosphooxymethyl)pyrimidine + H2O = 4-amino-2-methyl-5-(phosphooxymethyl)pyrimidine + phosphate + H(+). Functionally, catalyzes the hydrolysis of 4-amino-2-methyl-5-hydroxymethylpyrimidine pyrophosphate (HMP-PP) to 4-amino-2-methyl-5-hydroxymethylpyrimidine phosphate (HMP-P). In Enterobacter sp. (strain 638), this protein is HMP-PP phosphatase.